Reading from the N-terminus, the 168-residue chain is Protein-export protein SecB (168 aa).

The protein belongs to the SecB family. As to quaternary structure, homotetramer, a dimer of dimers. One homotetramer interacts with 1 SecA dimer.

It localises to the cytoplasm. One of the proteins required for the normal export of preproteins out of the cell cytoplasm. It is a molecular chaperone that binds to a subset of precursor proteins, maintaining them in a translocation-competent state. It also specifically binds to its receptor SecA. This is Protein-export protein SecB from Sinorhizobium medicae (strain WSM419) (Ensifer medicae).